The primary structure comprises 242 residues: Probable ABC transporter ATP-binding protein PEB1C (242 aa).

The ABC transporter domain maps to 2-236; sequence IELKNVNKYY…PKTERARLFL (235 aa). 34–41 serves as a coordination point for ATP; the sequence is GPSGSGKS.

This sequence belongs to the ABC transporter superfamily.

It localises to the cell inner membrane. In terms of biological role, most probably involved, with PEB1, in a binding-protein-dependent transport system for an amino acid. Probably responsible for energy coupling to the transport system. In Campylobacter jejuni subsp. jejuni serotype O:23/36 (strain 81-176), this protein is Probable ABC transporter ATP-binding protein PEB1C (peb1C).